Here is a 305-residue protein sequence, read N- to C-terminus: Sulfate adenylyltransferase subunit 2 (305 aa).

Belongs to the PAPS reductase family. CysD subfamily. As to quaternary structure, heterodimer composed of CysD, the smaller subunit, and CysN.

The catalysed reaction is sulfate + ATP + H(+) = adenosine 5'-phosphosulfate + diphosphate. It functions in the pathway sulfur metabolism; hydrogen sulfide biosynthesis; sulfite from sulfate: step 1/3. Its function is as follows. With CysN forms the ATP sulfurylase (ATPS) that catalyzes the adenylation of sulfate producing adenosine 5'-phosphosulfate (APS) and diphosphate, the first enzymatic step in sulfur assimilation pathway. APS synthesis involves the formation of a high-energy phosphoric-sulfuric acid anhydride bond driven by GTP hydrolysis by CysN coupled to ATP hydrolysis by CysD. This Pseudomonas fluorescens (strain ATCC BAA-477 / NRRL B-23932 / Pf-5) protein is Sulfate adenylyltransferase subunit 2.